A 283-amino-acid polypeptide reads, in one-letter code: Orotidine 5'-phosphate decarboxylase (283 aa).

Substrate contacts are provided by residues Asp-40, 62–64, 93–102, Tyr-220, and Arg-239; these read KTH and DRKFADIGNT. The Proton donor role is filled by Lys-95.

It belongs to the OMP decarboxylase family.

The catalysed reaction is orotidine 5'-phosphate + H(+) = UMP + CO2. It participates in pyrimidine metabolism; UMP biosynthesis via de novo pathway; UMP from orotate: step 2/2. The polypeptide is Orotidine 5'-phosphate decarboxylase (PYR6) (Mycosarcoma maydis (Corn smut fungus)).